The sequence spans 427 residues: Histidinol dehydrogenase (427 aa).

Serine 232, glutamine 254, and histidine 257 together coordinate substrate. Glutamine 254 and histidine 257 together coordinate Zn(2+). Catalysis depends on proton acceptor residues glutamate 322 and histidine 323. The substrate site is built by histidine 323, aspartate 356, glutamate 410, and histidine 415. Residue aspartate 356 coordinates Zn(2+). Histidine 415 contributes to the Zn(2+) binding site.

The protein belongs to the histidinol dehydrogenase family. It depends on Zn(2+) as a cofactor.

The enzyme catalyses L-histidinol + 2 NAD(+) + H2O = L-histidine + 2 NADH + 3 H(+). Its pathway is amino-acid biosynthesis; L-histidine biosynthesis; L-histidine from 5-phospho-alpha-D-ribose 1-diphosphate: step 9/9. Functionally, catalyzes the sequential NAD-dependent oxidations of L-histidinol to L-histidinaldehyde and then to L-histidine. In Listeria monocytogenes serotype 4b (strain F2365), this protein is Histidinol dehydrogenase.